The following is a 400-amino-acid chain: Enoyl-[acyl-carrier-protein] reductase [NADH] (400 aa).

Residues 48–53 (GSSSGY), 74–75 (FE), 111–112 (DA), and 139–140 (LA) each bind NAD(+). Tyr-225 is a substrate binding site. The active-site Proton donor is the Tyr-235. Residues Lys-244 and 273-275 (VVT) contribute to the NAD(+) site.

This sequence belongs to the TER reductase family. Monomer.

It catalyses the reaction a 2,3-saturated acyl-[ACP] + NAD(+) = a (2E)-enoyl-[ACP] + NADH + H(+). Its pathway is lipid metabolism; fatty acid biosynthesis. Functionally, involved in the final reduction of the elongation cycle of fatty acid synthesis (FAS II). Catalyzes the reduction of a carbon-carbon double bond in an enoyl moiety that is covalently linked to an acyl carrier protein (ACP). This chain is Enoyl-[acyl-carrier-protein] reductase [NADH], found in Shewanella pealeana (strain ATCC 700345 / ANG-SQ1).